The primary structure comprises 1143 residues: MKLLLLALILVLSNINLISGNGLVWPHPRLPCSPYDERGCINTQKCSSTDCDSFKRRIYFDVAYNTAFTIYQHTIFKYYSANYYKVELIVGGKVYFIHKFGQFRGDDCEFDEIIPAFYKKVQFLDLSTPIKATIQFSFDFSSHPKHANIYYSCIDVWLFDSAYYNYCPTNSGGGSGNSGGSWSSGGSGNSGGGWSSGGSGNSGGSWSSGNSGGHSTGDCPTSSGGWTSGSHSSGSWSSGGGSGSSSGGQSSGSWSSGGGSSSGGHSSGSWSSGGGSSAGGGSSSGSHSSGSWSSGGSSSGGQSSGSWSSGGGSSSGGQSSGSWSSGGGSSSGSHSSGSWSSGGSSSGSHSSGSWSSGGSSSSSGNSGWMTASGGNTGGNTGGNTGGNTGGQSSGNSGWMTASGGNTGGNTGGNTGGQSSGNSGWMTASGGNTGGNTGGNTGGQSSGSSSSGGNSGWLTSSGSNSGSSSSGSNSGWLTSSGNSVSSSSGGNSGWLTSSGGNSGGNSGSSSSGGNSGWLTSSGGNSGGSSSSGSNSGASSSGDNTGGNSGWLTSSGGNTGGNSGAATGGNSGGNSGASSSGGNSGGASSSGGNTGGNSGWLTSSGGNTGGNSGAATGGNSGGNSGASSSGGNSGWLTGGVTGGNSGGATGGNSGGATGGNSGGATGGNSGGATGGNSGGASSSGGNSGGATGGNSGGATGGNSGGATGGNSGGATGGNSGGATGGNSGGATGGNSGGASSSGGNTGGNSGGATGGNSGGATGGNSGGATGGNSGGATGGNSGGNSGASSSGGNSGWLTGGATGGNSGGATGGNSGAATGGNSGATGGNSGGNSGAATGGNIGGASSGSSSSGGNSGWLTGGATGGNSGGATGGNSGGATGGNSGGATGGNSGGATGGNSGGATGGNSGAATGANSGAATGANSGAATGANSGAATGANSGNNAAVTGAANGNNGAAAGANSGAATAANSGAATAANSGAATAANRGNNAAATGAANGNNGAAAGANSGAATAANSGAANSGAATAANSGAAAGANSGAATAANSGAATAASGGNGASGAANPGSIVTPNDQNVSPLSNSDAAATAASTTGRNPRNPTSRAPTVTPTPTSSAEEPAAGGEDSSAISKYSIQSFGIFVLSMIIYLVI.

A signal peptide spans 1–20 (MKLLLLALILVLSNINLISG). Residues 21–1121 (NGLVWPHPRL…PAAGGEDSSA (1101 aa)) are Extracellular-facing. The span at 177–203 (NSGGSWSSGGSGNSGGGWSSGGSGNSG) shows a compositional bias: gly residues. Residues 177–1120 (NSGGSWSSGG…EPAAGGEDSS (944 aa)) are disordered. Residues 222–236 (SSGGWTSGSHSSGSW) show a composition bias toward low complexity. The segment covering 237 to 283 (SSGGGSGSSSGGQSSGSWSSGGGSSSGGHSSGSWSSGGGSSAGGGSS) has biased composition (gly residues). The span at 284–296 (SGSHSSGSWSSGG) shows a compositional bias: low complexity. A compositionally biased stretch (gly residues) spans 297–330 (SSSGGQSSGSWSSGGGSSSGGQSSGSWSSGGGSS). Residues 331–368 (SGSHSSGSWSSGGSSSGSHSSGSWSSGGSSSSSGNSGW) are compositionally biased toward low complexity. A compositionally biased stretch (gly residues) spans 374–392 (GNTGGNTGGNTGGNTGGQS). Residues 393-403 (SGNSGWMTASG) show a composition bias toward low complexity. 2 stretches are compositionally biased toward gly residues: residues 404 to 418 (GNTGGNTGGNTGGQS) and 430 to 444 (GNTGGNTGGNTGGQS). Composition is skewed to low complexity over residues 445-498 (SGSS…TSSG) and 506-541 (GSSSSGGNSGWLTSSGGNSGGSSSSGSNSGASSSGD). 6 stretches are compositionally biased toward gly residues: residues 555–573 (GNTGGNSGAATGGNSGGNS), 580–596 (GNSGGASSSGGNTGGNS), 604–622 (GNTGGNSGAATGGNSGGNS), 629–783 (GNSG…GGNS), 790–843 (GNSG…GGAS), and 851–905 (GNSG…GGNS). The segment covering 906-1059 (GAATGANSGA…GGNGASGAAN (154 aa)) has biased composition (low complexity). Residues 1062 to 1078 (SIVTPNDQNVSPLSNSD) are compositionally biased toward polar residues. Positions 1094–1114 (PTSRAPTVTPTPTSSAEEPAA) are enriched in low complexity. Residues 1122 to 1142 (ISKYSIQSFGIFVLSMIIYLV) form a helical membrane-spanning segment. A topological domain (cytoplasmic) is located at residue isoleucine 1143.

Its subcellular location is the membrane. This is an uncharacterized protein from Dictyostelium discoideum (Social amoeba).